A 243-amino-acid polypeptide reads, in one-letter code: Adenosylcobinamide-GDP ribazoletransferase (243 aa).

A run of 7 helical transmembrane segments spans residues 8–28 (WLGAIAFYTCLPISPRWPIQL), 36–56 (PWVGLVLGGMLWGVQWLLDFL), 58–78 (VPSPVASAVLVALWLALTGGL), 107–127 (AGAFGVMAAMVILLLKVTSLS), 131–151 (KGSVLVWVLVLGRLAQVWAIA), 187–207 (FLLPLPLGQLLFGLLLILLIP), and 222–242 (YGAVVEWTEALLLVAFTVGSA).

It belongs to the CobS family. Requires Mg(2+) as cofactor.

The protein resides in the cell inner membrane. It catalyses the reaction alpha-ribazole + adenosylcob(III)inamide-GDP = adenosylcob(III)alamin + GMP + H(+). The enzyme catalyses alpha-ribazole 5'-phosphate + adenosylcob(III)inamide-GDP = adenosylcob(III)alamin 5'-phosphate + GMP + H(+). Its pathway is cofactor biosynthesis; adenosylcobalamin biosynthesis; adenosylcobalamin from cob(II)yrinate a,c-diamide: step 7/7. In terms of biological role, joins adenosylcobinamide-GDP and alpha-ribazole to generate adenosylcobalamin (Ado-cobalamin). Also synthesizes adenosylcobalamin 5'-phosphate from adenosylcobinamide-GDP and alpha-ribazole 5'-phosphate. This chain is Adenosylcobinamide-GDP ribazoletransferase, found in Thermosynechococcus vestitus (strain NIES-2133 / IAM M-273 / BP-1).